The sequence spans 185 residues: Potassium-transporting ATPase KdpC subunit (185 aa).

Residues 11 to 31 form a helical membrane-spanning segment; that stretch reads LALLMTLVTGALYPLAVTGIA.

It belongs to the KdpC family. The system is composed of three essential subunits: KdpA, KdpB and KdpC.

It is found in the cell inner membrane. Its function is as follows. Part of the high-affinity ATP-driven potassium transport (or Kdp) system, which catalyzes the hydrolysis of ATP coupled with the electrogenic transport of potassium into the cytoplasm. This subunit acts as a catalytic chaperone that increases the ATP-binding affinity of the ATP-hydrolyzing subunit KdpB by the formation of a transient KdpB/KdpC/ATP ternary complex. In Pseudomonas putida (strain ATCC 47054 / DSM 6125 / CFBP 8728 / NCIMB 11950 / KT2440), this protein is Potassium-transporting ATPase KdpC subunit.